The chain runs to 372 residues: Fork head domain-containing protein FD4 (372 aa).

The segment at residues 12-103 (QKPPYSYISL…FDMFENGSLL (92 aa)) is a DNA-binding region (fork-head). Disordered stretches follow at residues 225-245 (ESLI…DEDD) and 261-281 (PTTP…RTED).

As to expression, expressed in early embryogenesis in 14 symmetrical pairs of segmentally arranged neuroblasts. Also, later in embryogenesis, in a cluster of cells in head region.

The protein resides in the nucleus. Functionally, involved in development during embryogenesis. This Drosophila melanogaster (Fruit fly) protein is Fork head domain-containing protein FD4 (fd96Ca).